A 147-amino-acid chain; its full sequence is Large ribosomal subunit protein bL9 (147 aa).

It belongs to the bacterial ribosomal protein bL9 family.

Its function is as follows. Binds to the 23S rRNA. This Caldanaerobacter subterraneus subsp. tengcongensis (strain DSM 15242 / JCM 11007 / NBRC 100824 / MB4) (Thermoanaerobacter tengcongensis) protein is Large ribosomal subunit protein bL9.